The chain runs to 178 residues: ATP synthase subunit delta (178 aa).

This sequence belongs to the ATPase delta chain family. F-type ATPases have 2 components, F(1) - the catalytic core - and F(0) - the membrane proton channel. F(1) has five subunits: alpha(3), beta(3), gamma(1), delta(1), epsilon(1). F(0) has three main subunits: a(1), b(2) and c(10-14). The alpha and beta chains form an alternating ring which encloses part of the gamma chain. F(1) is attached to F(0) by a central stalk formed by the gamma and epsilon chains, while a peripheral stalk is formed by the delta and b chains.

It localises to the cell membrane. In terms of biological role, f(1)F(0) ATP synthase produces ATP from ADP in the presence of a proton or sodium gradient. F-type ATPases consist of two structural domains, F(1) containing the extramembraneous catalytic core and F(0) containing the membrane proton channel, linked together by a central stalk and a peripheral stalk. During catalysis, ATP synthesis in the catalytic domain of F(1) is coupled via a rotary mechanism of the central stalk subunits to proton translocation. This protein is part of the stalk that links CF(0) to CF(1). It either transmits conformational changes from CF(0) to CF(1) or is implicated in proton conduction. This Streptococcus gordonii (strain Challis / ATCC 35105 / BCRC 15272 / CH1 / DL1 / V288) protein is ATP synthase subunit delta.